The chain runs to 126 residues: uncharacterized protein (126 aa).

The HIT domain occupies I19–A126. A Histidine triad motif motif is present at residues H111–H115.

This is an uncharacterized protein from Chlamydia muridarum (strain MoPn / Nigg).